We begin with the raw amino-acid sequence, 780 residues long: Lon protease (780 aa).

The Lon N-terminal domain maps to 11–204; the sequence is IPVLPLRDVV…RLMAIMESEI (194 aa). 356-363 provides a ligand contact to ATP; that stretch reads GPPGVGKT. In terms of domain architecture, Lon proteolytic spans 592–773; that stretch reads KNQIGQVIGL…KEVLNLSLEN (182 aa). Active-site residues include Ser679 and Lys722.

Belongs to the peptidase S16 family. Homohexamer. Organized in a ring with a central cavity.

The protein localises to the cytoplasm. The catalysed reaction is Hydrolysis of proteins in presence of ATP.. Functionally, ATP-dependent serine protease that mediates the selective degradation of mutant and abnormal proteins as well as certain short-lived regulatory proteins. Required for cellular homeostasis and for survival from DNA damage and developmental changes induced by stress. Degrades polypeptides processively to yield small peptide fragments that are 5 to 10 amino acids long. Binds to DNA in a double-stranded, site-specific manner. This is Lon protease from Buchnera aphidicola subsp. Baizongia pistaciae (strain Bp).